The sequence spans 158 residues: NAD(P)H-quinone oxidoreductase subunit J, chloroplastic (158 aa).

Belongs to the complex I 30 kDa subunit family. NDH is composed of at least 16 different subunits, 5 of which are encoded in the nucleus.

The protein resides in the plastid. Its subcellular location is the chloroplast thylakoid membrane. It catalyses the reaction a plastoquinone + NADH + (n+1) H(+)(in) = a plastoquinol + NAD(+) + n H(+)(out). The enzyme catalyses a plastoquinone + NADPH + (n+1) H(+)(in) = a plastoquinol + NADP(+) + n H(+)(out). Its function is as follows. NDH shuttles electrons from NAD(P)H:plastoquinone, via FMN and iron-sulfur (Fe-S) centers, to quinones in the photosynthetic chain and possibly in a chloroplast respiratory chain. The immediate electron acceptor for the enzyme in this species is believed to be plastoquinone. Couples the redox reaction to proton translocation, and thus conserves the redox energy in a proton gradient. This Cicer arietinum (Chickpea) protein is NAD(P)H-quinone oxidoreductase subunit J, chloroplastic.